A 727-amino-acid chain; its full sequence is MLRIPVRKALVGLSKSSKGCVRTTATAASNLIEVFVDGQSVMVEPGTTVLQACEKVGMQIPRFCYHERLSVAGNCRMCLVEIEKAPKVVAACAMPVMKGWNILTNSEKTKKAREGVMEFLLANHPLDCPICDQGGECDLQDQSMMFGSDRSRFLEGKRAVEDKNIGPLVKTIMTRCIQCTRCIRFASEIAGVDDLGTTGRGNDMQVGTYIEKMFMSELSGNIIDICPVGALTSKPYAFTARPWETRKTESIDVMDAVGSNIVVSTRTGEVMRILPRMHEDINEEWISDKTRFAYDGLKRQRLTEPMVRNEKGLLTHTTWEDALSRVAGMLQSFQGNDVAAIAGGLVDAEALIALKDLLNRVDSDTLCTEEVFPTAGAGTDLRSNYLLNTTIAGVEEADVVLLVGTNPRFEAPLFNARIRKSWLHNDLKVALIGSPVDLTYRYDHLGDSPKILQDIASGSHPFSQVLQEAKKPMVILGSSALQRNDGAAILAAVSNIAQKIRTSSGVTGDWKVMNILHRIASQVAALDLGYKPGVEAIQKNPPKMLFLLGADGGCITRQDLPKDCFIVYQGHHGDVGAPIADVILPGAAYTEKSATYVNTEGRAQQTKVAVTPPGLAREDWKIIRALSEIAGMTLPYDTLDQVRNRLEEVSPNLVRYDDVEGANYFQQASELSKLVNQQLLADPLVPPQLTIKDFYMTDSISRASQTMAKCVKAVTEGAHAVEEPSIC.

Residues 1-23 (MLRIPVRKALVGLSKSSKGCVRT) constitute a mitochondrion transit peptide. A 2Fe-2S ferredoxin-type domain is found at 30 to 108 (NLIEVFVDGQ…GWNILTNSEK (79 aa)). The [2Fe-2S] cluster site is built by cysteine 64, cysteine 75, and cysteine 78. Lysine 84 is modified (N6-acetyllysine). Cysteine 92 provides a ligand contact to [2Fe-2S] cluster. Residues 108–147 (KTKKAREGVMEFLLANHPLDCPICDQGGECDLQDQSMMFG) enclose the 4Fe-4S His(Cys)3-ligated-type domain. [4Fe-4S] cluster contacts are provided by histidine 124, cysteine 128, cysteine 131, cysteine 137, cysteine 176, cysteine 179, cysteine 182, and cysteine 226. Residues 245–301 (TRKTESIDVMDAVGSNIVVSTRTGEVMRILPRMHEDINEEWISDKTRFAYDGLKRQR) form the 4Fe-4S Mo/W bis-MGD-type domain. N6-acetyllysine is present on residues lysine 499 and lysine 709.

The protein belongs to the complex I 75 kDa subunit family. In terms of assembly, core subunit of respiratory chain NADH dehydrogenase (Complex I) which is composed of 45 different subunits. This is the largest subunit of complex I and it is a component of the iron-sulfur (IP) fragment of the enzyme. Complex I associates with ubiquinol-cytochrome reductase complex (Complex III) to form supercomplexes. Interacts with MDM2 and AKAP1. It depends on [2Fe-2S] cluster as a cofactor. [4Fe-4S] cluster serves as cofactor.

The protein resides in the mitochondrion inner membrane. The enzyme catalyses a ubiquinone + NADH + 5 H(+)(in) = a ubiquinol + NAD(+) + 4 H(+)(out). Core subunit of the mitochondrial membrane respiratory chain NADH dehydrogenase (Complex I) which catalyzes electron transfer from NADH through the respiratory chain, using ubiquinone as an electron acceptor. Essential for catalysing the entry and efficient transfer of electrons within complex I. Plays a key role in the assembly and stability of complex I and participates in the association of complex I with ubiquinol-cytochrome reductase complex (Complex III) to form supercomplexes. The protein is NADH-ubiquinone oxidoreductase 75 kDa subunit, mitochondrial (NDUFS1) of Bos taurus (Bovine).